Here is a 432-residue protein sequence, read N- to C-terminus: Alcohol acyltransferase 9 (432 aa).

Catalysis depends on proton acceptor residues His-156 and Asp-379.

Belongs to the plant acyltransferase family. As to expression, expressed in fruit.

The enzyme catalyses 2-(methylsulfanyl)acetyl-CoA + butan-1-ol = butyl 2-(methylsulfanyl)acetate + CoA. It catalyses the reaction ethanol + acetyl-CoA = ethyl acetate + CoA. The catalysed reaction is butan-1-ol + acetyl-CoA = butyl acetate + CoA. It carries out the reaction butan-1-ol + propanoyl-CoA = butyl propanoate + CoA. Functionally, involved in the biosynthesis of volatile esters which confer kiwifruit flavor. Alcohol acyl transferase that can use a wide range of alcohols as substrate to produce esters. Exhibits acetyl-CoA:alcohol O-acyltransferase activity. This chain is Alcohol acyltransferase 9, found in Actinidia deliciosa (Kiwi).